The following is a 72-amino-acid chain: Bowman-Birk type proteinase inhibitor 2a (72 aa).

Cystine bridges form between cysteine 8–cysteine 61, cysteine 9–cysteine 24, cysteine 12–cysteine 57, cysteine 14–cysteine 22, cysteine 31–cysteine 38, cysteine 35–cysteine 50, and cysteine 40–cysteine 48.

As to quaternary structure, dimer.

Its function is as follows. Inhibits trypsin (IC(50)=0.9 nM) and alpha-chymotrypsin (IC(50)=1.1 nM). This chain is Bowman-Birk type proteinase inhibitor 2a, found in Lathyrus sativus (White vetchling).